We begin with the raw amino-acid sequence, 187 residues long: ATP synthase subunit delta, chloroplastic (187 aa).

It belongs to the ATPase delta chain family. F-type ATPases have 2 components, F(1) - the catalytic core - and F(0) - the membrane proton channel. F(1) has five subunits: alpha(3), beta(3), gamma(1), delta(1), epsilon(1). CF(0) has four main subunits: a(1), b(1), b'(1) and c(10-14). The alpha and beta chains form an alternating ring which encloses part of the gamma chain. F(1) is attached to F(0) by a central stalk formed by the gamma and epsilon chains, while a peripheral stalk is formed by the delta, b and b' chains.

The protein localises to the plastid. The protein resides in the chloroplast thylakoid membrane. F(1)F(0) ATP synthase produces ATP from ADP in the presence of a proton or sodium gradient. F-type ATPases consist of two structural domains, F(1) containing the extramembraneous catalytic core and F(0) containing the membrane proton channel, linked together by a central stalk and a peripheral stalk. During catalysis, ATP synthesis in the catalytic domain of F(1) is coupled via a rotary mechanism of the central stalk subunits to proton translocation. Its function is as follows. This protein is part of the stalk that links CF(0) to CF(1). It either transmits conformational changes from CF(0) to CF(1) or is implicated in proton conduction. This chain is ATP synthase subunit delta, chloroplastic, found in Thalassiosira pseudonana (Marine diatom).